A 650-amino-acid chain; its full sequence is Putative F-box protein R757 (650 aa).

An F-box domain is found at 7–53 (FSVMESLPTELAYHVLSFIDFNSVVTYRLCSQESNNFIKSMLVFFPI).

In Acanthamoeba polyphaga mimivirus (APMV), this protein is Putative F-box protein R757.